The primary structure comprises 103 residues: UPF0134 protein MPN_484 (103 aa).

This sequence belongs to the UPF0134 family.

The chain is UPF0134 protein MPN_484 from Mycoplasma pneumoniae (strain ATCC 29342 / M129 / Subtype 1) (Mycoplasmoides pneumoniae).